Consider the following 65-residue polypeptide: Hirudin-2 (65 aa).

Positions 1 to 3 (ITY) are interaction with thrombin active site. 3 disulfides stabilise this stretch: Cys6-Cys14, Cys16-Cys28, and Cys22-Cys39. Positions 39–65 (CVTGEGTPKPQSHNDGDFEEIPEEYLQ) are disordered. Thr45 carries O-linked (GalNAc...) threonine glycosylation. The interaction with fibrinogen-binding exosite of thrombin stretch occupies residues 55–65 (DFEEIPEEYLQ). The segment covering 55–65 (DFEEIPEEYLQ) has biased composition (acidic residues). At Tyr63 the chain carries Sulfotyrosine.

This sequence belongs to the protease inhibitor I14 (hirudin) family.

The protein resides in the secreted. Hirudin is a potent thrombin-specific protease inhibitor. It forms a stable non-covalent complex with alpha-thrombin, thereby abolishing its ability to cleave fibrinogen. This is Hirudin-2 from Hirudo medicinalis (Medicinal leech).